The chain runs to 504 residues: Maturase K (504 aa).

Belongs to the intron maturase 2 family. MatK subfamily.

The protein localises to the plastid. Its subcellular location is the chloroplast. Usually encoded in the trnK tRNA gene intron. Probably assists in splicing its own and other chloroplast group II introns. In Actinidia deliciosa (Kiwi), this protein is Maturase K.